Consider the following 442-residue polypeptide: UDP-N-acetylmuramoylalanine--D-glutamate ligase (442 aa).

This sequence belongs to the MurCDEF family.

The protein localises to the cytoplasm. The enzyme catalyses UDP-N-acetyl-alpha-D-muramoyl-L-alanine + D-glutamate + ATP = UDP-N-acetyl-alpha-D-muramoyl-L-alanyl-D-glutamate + ADP + phosphate + H(+). Its pathway is cell wall biogenesis; peptidoglycan biosynthesis. Functionally, cell wall formation. Catalyzes the addition of glutamate to the nucleotide precursor UDP-N-acetylmuramoyl-L-alanine (UMA). This Buchnera aphidicola subsp. Baizongia pistaciae (strain Bp) protein is UDP-N-acetylmuramoylalanine--D-glutamate ligase.